Reading from the N-terminus, the 335-residue chain is Glycerol-3-phosphate dehydrogenase [NAD(P)+] (335 aa).

NADPH-binding residues include Ser12, Trp13, and Lys107. Sn-glycerol 3-phosphate is bound by residues Lys107, Gly138, and Ser140. Ala142 provides a ligand contact to NADPH. Lys193, Asp246, Ser256, Arg257, and Asn258 together coordinate sn-glycerol 3-phosphate. The active-site Proton acceptor is the Lys193. Arg257 contacts NADPH. 2 residues coordinate NADPH: Val281 and Glu283.

It belongs to the NAD-dependent glycerol-3-phosphate dehydrogenase family.

Its subcellular location is the cytoplasm. The catalysed reaction is sn-glycerol 3-phosphate + NAD(+) = dihydroxyacetone phosphate + NADH + H(+). It carries out the reaction sn-glycerol 3-phosphate + NADP(+) = dihydroxyacetone phosphate + NADPH + H(+). Its pathway is membrane lipid metabolism; glycerophospholipid metabolism. Its function is as follows. Catalyzes the reduction of the glycolytic intermediate dihydroxyacetone phosphate (DHAP) to sn-glycerol 3-phosphate (G3P), the key precursor for phospholipid synthesis. This Geobacter metallireducens (strain ATCC 53774 / DSM 7210 / GS-15) protein is Glycerol-3-phosphate dehydrogenase [NAD(P)+].